The primary structure comprises 1025 residues: MKFFALFIHRPVATTLLTLAIALAGILGFRLLPVAPLPQVDFPVIMVSASLPGASPETMASSVATPLERSLGRIAGVSEMTSTSSLGSTRIIMVFDFDRDINGAARDVQAAINAAQSLLPTGMPSRPTYRKANPSDAPIMIMTLTSDLYSPAQLYDYASTQLAQKLSQINGVGDVTVGGSSLPAVRVALNPQALFNQGVSLDAVRQTISNANQRRPQGAVEDGQQRWQLRTNDALQTASEYQPLVVHYNNGAAVRLSDVATVQDSVQDVRNAGMSRGKPAVLLVIRKTADANVIETVDRIRAELPELHEIIPAAINLEVAQDRSPTIRASLEEVEQSLMIAVALVILVVFVFLRSGRATLIPAVAVPVSLIGTFAAMYLCGFSLNNLSLMALTIATGFVVDDAIVVLENIARHVEAGMKPMAAALKGVREVGFTVLSMSLSLIAVFLPLLMTGGLIGRFFAEFSITLSVAILISLFVSVTLTPMMCAYLLKPHAPRSQPQRRGVGRLLLAVQRGYARSLTVVLNHARWVLLLLLGTVALTVWLFISIPKTFLPEQDTGRLSGFISADQSISFQAMRGKLEDFMKIVGADPDVSSVVGFTGGMRTNMGLMFISLKPLSERKDTAQAVIARLRAKLANEPGANLYLNAVQDIRVGGREANASYQYSLLSDDLAALRTWEPKIRQAFTALPELADVNSDQQDKGSEMALTYDRASMARLGINVSEANALLNDAFGQRQISTIYQPLNQYKVVMEVDPRYTQDISALNQMFVINSEGKPIPLAWFAKWQPANAPLSVNHEGLSAASTISFNLPEGVSLSQASEAIERTMTALGVPSSVRGSFAGTAQAFQQSQSSQLWLMLAAIAAVYIVLGILYESYVHPLTILSTLPSAGVGALLALALFDTPFSLIALIGILLLIGIVKKNAIMMVDFALEAERNGNLSPRDAIFQACLLRFRPILMTTLAALFGALPLVLTSGDGAELRQPLGITIAGGLIMSQLLTLYTTPVVYLMMDKLRRKKRTQTINATQH.

12 helical membrane passes run 16–36 (LLTL…PVAP), 333–353 (EVEQ…FVFL), 360–380 (LIPA…MYLC), 387–407 (LSLM…IVVL), 431–451 (VGFT…PLLM), 459–479 (FFAE…FVSV), 528–548 (WVLL…ISIP), 853–873 (LWLM…LYES), 875–895 (VHPL…LLAL), 897–917 (LFDT…IGIV), 953–973 (PILM…LTSG), and 984–1004 (ITIA…TPVV).

The protein belongs to the resistance-nodulation-cell division (RND) (TC 2.A.6) family. MdtC subfamily. Part of a tripartite efflux system composed of MdtA, MdtB and MdtC. MdtC forms a heteromultimer with MdtB.

It is found in the cell inner membrane. The polypeptide is Multidrug resistance protein MdtC (Pantoea ananatis (strain AJ13355)).